Reading from the N-terminus, the 278-residue chain is Tumor necrosis factor receptor superfamily member 5 (278 aa).

The first 20 residues, 1–20, serve as a signal peptide directing secretion; the sequence is MVRLPLKCLLWGCFLTAVHP. Residues 21–194 are Extracellular-facing; that stretch reads EPPTSCKENQ…VCGFQSRMRA (174 aa). TNFR-Cys repeat units lie at residues 25 to 60, 61 to 103, 104 to 144, and 145 to 187; these read SCKE…TECL, PCSS…DTTC, VCSE…TICE, and PCPV…VVCG. 8 cysteine pairs are disulfide-bonded: Cys-26–Cys-37, Cys-38–Cys-51, Cys-41–Cys-59, Cys-62–Cys-77, Cys-83–Cys-103, Cys-105–Cys-119, Cys-111–Cys-116, and Cys-125–Cys-143. Asn-153 and Asn-180 each carry an N-linked (GlcNAc...) asparagine glycan. A helical membrane pass occupies residues 195 to 215; sequence LVVIPITLGILFAVLLVFLCI. Over 216–278 the chain is Cytoplasmic; the sequence is RKVTKEQETK…ESRISVQERE (63 aa).

Monomer and homodimer. Interacts with TRAF1, TRAF2, TRAF3, TRAF5 and TRAF6. Interacts with TRAF6 and MAP3K8; the interaction is required for ERK activation.

It localises to the membrane. In terms of biological role, receptor for TNFSF5/CD40LG. Transduces TRAF6- and MAP3K8-mediated signals that activate ERK in macrophages and B cells, leading to induction of immunoglobulin secretion. This Sus scrofa (Pig) protein is Tumor necrosis factor receptor superfamily member 5 (CD40).